Reading from the N-terminus, the 34-residue chain is U2-theraphotoxin-Bs1a (34 aa).

3 cysteine pairs are disulfide-bonded: Cys2/Cys16, Cys9/Cys21, and Cys15/Cys28.

As to expression, expressed by the venom gland.

The protein resides in the secreted. This Brachypelma smithi (Mexican red knee tarantula) protein is U2-theraphotoxin-Bs1a.